Here is a 460-residue protein sequence, read N- to C-terminus: Bifunctional protein GlmU (460 aa).

A pyrophosphorylase region spans residues 1 to 229; that stretch reads MSKLNIVVLA…VWETTGVNSK (229 aa). Residues 9–12, Lys23, Gln74, 79–80, 101–103, Gly138, Glu154, Asn169, and Asn227 each bind UDP-N-acetyl-alpha-D-glucosamine; these read LAAG, GT, and YGD. Position 103 (Asp103) interacts with Mg(2+). A Mg(2+)-binding site is contributed by Asn227. Positions 230–250 are linker; it reads VQLAGLERIYQTAQANKLLEQ. The interval 251 to 460 is N-acetyltransferase; it reads GVALADPARI…RPVKKPKPKN (210 aa). Residues Arg333 and Lys351 each contribute to the UDP-N-acetyl-alpha-D-glucosamine site. His363 functions as the Proton acceptor in the catalytic mechanism. Tyr366 and Asn377 together coordinate UDP-N-acetyl-alpha-D-glucosamine. Residues Ala380, 386 to 387, Ser405, Ala423, and Arg440 each bind acetyl-CoA; that span reads NY.

This sequence in the N-terminal section; belongs to the N-acetylglucosamine-1-phosphate uridyltransferase family. In the C-terminal section; belongs to the transferase hexapeptide repeat family. Homotrimer. It depends on Mg(2+) as a cofactor.

The protein resides in the cytoplasm. It carries out the reaction alpha-D-glucosamine 1-phosphate + acetyl-CoA = N-acetyl-alpha-D-glucosamine 1-phosphate + CoA + H(+). The catalysed reaction is N-acetyl-alpha-D-glucosamine 1-phosphate + UTP + H(+) = UDP-N-acetyl-alpha-D-glucosamine + diphosphate. The protein operates within nucleotide-sugar biosynthesis; UDP-N-acetyl-alpha-D-glucosamine biosynthesis; N-acetyl-alpha-D-glucosamine 1-phosphate from alpha-D-glucosamine 6-phosphate (route II): step 2/2. It functions in the pathway nucleotide-sugar biosynthesis; UDP-N-acetyl-alpha-D-glucosamine biosynthesis; UDP-N-acetyl-alpha-D-glucosamine from N-acetyl-alpha-D-glucosamine 1-phosphate: step 1/1. Its pathway is bacterial outer membrane biogenesis; LPS lipid A biosynthesis. Functionally, catalyzes the last two sequential reactions in the de novo biosynthetic pathway for UDP-N-acetylglucosamine (UDP-GlcNAc). The C-terminal domain catalyzes the transfer of acetyl group from acetyl coenzyme A to glucosamine-1-phosphate (GlcN-1-P) to produce N-acetylglucosamine-1-phosphate (GlcNAc-1-P), which is converted into UDP-GlcNAc by the transfer of uridine 5-monophosphate (from uridine 5-triphosphate), a reaction catalyzed by the N-terminal domain. This Nitrosospira multiformis (strain ATCC 25196 / NCIMB 11849 / C 71) protein is Bifunctional protein GlmU.